A 317-amino-acid polypeptide reads, in one-letter code: Dehydrogenase/reductase SDR family protein 7-like (317 aa).

At 1–10 the chain is on the cytoplasmic side; the sequence is MKNLAERSAG. The helical; Signal-anchor for type II membrane protein transmembrane segment at 11–31 threads the bilayer; it reads SLYWWLLATLFLPIAIPGLVL. The Peroxisomal portion of the chain corresponds to 32–317; it reads KLLTMMKEQR…KKRAEKLNST (286 aa). 52 to 76 is a binding site for NAD(+); the sequence is LITGASSGLGEALAHSFFLAGCKVV. Ser-189 is a binding site for substrate. Catalysis depends on Tyr-202, which acts as the Proton acceptor.

This sequence belongs to the short-chain dehydrogenases/reductases (SDR) family.

It localises to the peroxisome membrane. In terms of biological role, putative oxidoreductase. The chain is Dehydrogenase/reductase SDR family protein 7-like from Anopheles gambiae (African malaria mosquito).